Reading from the N-terminus, the 481-residue chain is Glutamyl-tRNA(Gln) amidotransferase subunit A (481 aa).

Catalysis depends on charge relay system residues lysine 76 and serine 151. Catalysis depends on serine 175, which acts as the Acyl-ester intermediate.

Belongs to the amidase family. GatA subfamily. As to quaternary structure, heterotrimer of A, B and C subunits.

The catalysed reaction is L-glutamyl-tRNA(Gln) + L-glutamine + ATP + H2O = L-glutaminyl-tRNA(Gln) + L-glutamate + ADP + phosphate + H(+). In terms of biological role, allows the formation of correctly charged Gln-tRNA(Gln) through the transamidation of misacylated Glu-tRNA(Gln) in organisms which lack glutaminyl-tRNA synthetase. The reaction takes place in the presence of glutamine and ATP through an activated gamma-phospho-Glu-tRNA(Gln). This chain is Glutamyl-tRNA(Gln) amidotransferase subunit A, found in Neisseria meningitidis serogroup C / serotype 2a (strain ATCC 700532 / DSM 15464 / FAM18).